A 215-amino-acid chain; its full sequence is Nucleoredoxin-like protein 1 (215 aa).

The Thioredoxin; atypical domain maps to 1–164 (MVDLFLGKVL…GAELIDRNFM (164 aa)). Residues 190–215 (DEKKKKKKRDDDDDDDDGGGGGGPWG) form a disordered region.

This sequence belongs to the nucleoredoxin family.

It localises to the cell projection. The protein localises to the cilium. It is found in the photoreceptor outer segment. Functionally, plays an important role in retinal cone photoreceptor survival. May play a role in cone cell viability, slowing down cone degeneration, does not seem to play a role in degenerating rods. The sequence is that of Nucleoredoxin-like protein 1 (nxnl1) from Danio rerio (Zebrafish).